The sequence spans 201 residues: Ribonuclease HII (201 aa).

The RNase H type-2 domain occupies 11–201 (LRECGCDEAG…VVDADRPTTE (191 aa)). 3 residues coordinate a divalent metal cation: D17, E18, and D109.

This sequence belongs to the RNase HII family. Mn(2+) serves as cofactor. It depends on Mg(2+) as a cofactor.

Its subcellular location is the cytoplasm. It carries out the reaction Endonucleolytic cleavage to 5'-phosphomonoester.. In terms of biological role, endonuclease that specifically degrades the RNA of RNA-DNA hybrids. The protein is Ribonuclease HII (rnhB) of Porphyromonas gingivalis (strain ATCC BAA-308 / W83).